The sequence spans 348 residues: Protein RecA (348 aa).

ATP is bound at residue 64 to 71; that stretch reads GPESSGKT.

It belongs to the RecA family.

It localises to the cytoplasm. Its function is as follows. Can catalyze the hydrolysis of ATP in the presence of single-stranded DNA, the ATP-dependent uptake of single-stranded DNA by duplex DNA, and the ATP-dependent hybridization of homologous single-stranded DNAs. It interacts with LexA causing its activation and leading to its autocatalytic cleavage. This is Protein RecA from Blastochloris viridis (Rhodopseudomonas viridis).